The primary structure comprises 251 residues: MNERVKQVASALVDAIQKTLTEQRVTEEEWRAGVGYMMKLAEAKEVAVLLDAFFNHTIVDLKAQATRGSRPAMQGPYFLEGAPVVAGALKTYEDDSHHPLVIRGAVRTDDGAPAAGAVIDVWHSTPDGKYSGIHDQIPTDMYRGKVVADAQGKYAVRTTMPAPYQIPNKGPTGVLLEMMGSHTWRPAHVHFKVRKDGFAPLTTQYYFEGGDWVDSDCCKGVAPDLVMPTKTEGGAQVMDIDFVIERAREHV.

Y130, Y164, H188, and H190 together coordinate Fe cation.

Belongs to the intradiol ring-cleavage dioxygenase family. The cofactor is Fe(3+).

It catalyses the reaction 3-chlorocatechol + O2 = (2E,4Z)-2-chloromuconate + 2 H(+). It carries out the reaction 3,4-dichlorocatechol + O2 = (2Z,4Z)-2,3-dichloromuconate + 2 H(+). The catalysed reaction is 3,5-dichlorocatechol + O2 = (2E,4E)-2,4-dichloromuconate + 2 H(+). The enzyme catalyses 3,6-dichlorocatechol + O2 = (2E,4E)-2,5-dichloromuconate + H(+). It catalyses the reaction 3,4,6-trichlorocatechol + O2 = (2Z,4E)-2,3,5-trichloromuconate + H(+). The protein operates within xenobiotic degradation. In terms of biological role, chlorocatechol 1,2-dioxygenase involved in the degradation of chlorinated benzenes, that occurs via chlorocatechol intermediates. Displays broad substrate specificity. Preferentially cleaves 3-chlorocatechol and 3,4-dichlorocatechol, and shows lower activity on 3,5-dichlorocatechol, 3,6-dichlorocatechol and 3,4,6-trichlorocatechol in vitro. Is not able to convert 3,4,5-trichlorocatechol and 3,4,5,6-tetrachlorocatechol. Thus, probably functions in the degradation pathways of 1,2-dichlorobenzene, 1,4-dichlorobenzene and 1,2,4-trichlorobenzene (via 3,4-dichlorocatechol, 3,6-dichlorocatechol and 3,4,6-trichlorocatechol intermediates, respectively), which allow Pseudomonas sp. strain P51 to grow on these substrates as the sole carbon and energy source. In Pseudomonas sp. (strain P51), this protein is Chlorocatechol 1,2-dioxygenase.